The following is a 283-amino-acid chain: ATP synthase gamma chain (283 aa).

It belongs to the ATPase gamma chain family. F-type ATPases have 2 components, CF(1) - the catalytic core - and CF(0) - the membrane proton channel. CF(1) has five subunits: alpha(3), beta(3), gamma(1), delta(1), epsilon(1). CF(0) has three main subunits: a, b and c.

It localises to the cell inner membrane. Produces ATP from ADP in the presence of a proton gradient across the membrane. The gamma chain is believed to be important in regulating ATPase activity and the flow of protons through the CF(0) complex. This chain is ATP synthase gamma chain, found in Ehrlichia ruminantium (strain Welgevonden).